The sequence spans 430 residues: MGQSVVVLGAQWGDEGKGKIVDLLTEEIGAVVRFQGGHNAGHTLVINGKKTVLHLIPSGILRDDALCLIGNGVVISPAALIKEISELEDAGVEVRSRLKISPAAPLIMPYHIALDQAREKAAGGKAIGTTGRGIGPAYEDKVARRGIRIADLHYPPQLEELLRTALDYHNFVLTKYLGVEAVDFQKTYDEALAFGEYVQPMKSDVAGILHDLRKQGKRVLFEGAQGALLDIDHGTYPYVTSSNTTVGGALAGTGVGADAIDYVLGIAKAYATRVGGGPFPTELDDEVGQGIRDRGAEYGASTGRPRRCGWMDIVALKRAVAINGISGLCITKLDVLDGMEKLKICIAYEYHGKRTEYAPLDAQGWEECTPVYLEFPGWSENTHGITVWDDLPPAARAYLRALEELAGCPISIVSTGPDRDHTMVLQDPFA.

GTP is bound by residues 13-19 (GDEGKGK) and 41-43 (GHT). Asp-14 (proton acceptor) is an active-site residue. Mg(2+) contacts are provided by Asp-14 and Gly-41. IMP contacts are provided by residues 14-17 (DEGK), 39-42 (NAGH), Thr-130, Arg-144, Gln-225, Thr-240, and Arg-304. Residue His-42 is the Proton donor of the active site. 300 to 306 (ASTGRPR) contacts substrate. GTP-binding positions include Arg-306, 332-334 (KLD), and 414-416 (STG).

It belongs to the adenylosuccinate synthetase family. In terms of assembly, homodimer. It depends on Mg(2+) as a cofactor.

The protein resides in the cytoplasm. The enzyme catalyses IMP + L-aspartate + GTP = N(6)-(1,2-dicarboxyethyl)-AMP + GDP + phosphate + 2 H(+). The protein operates within purine metabolism; AMP biosynthesis via de novo pathway; AMP from IMP: step 1/2. Functionally, plays an important role in the de novo pathway of purine nucleotide biosynthesis. Catalyzes the first committed step in the biosynthesis of AMP from IMP. This is Adenylosuccinate synthetase from Xanthomonas axonopodis pv. citri (strain 306).